The primary structure comprises 342 residues: Alternative oxidase, mitochondrial (342 aa).

Residues 1–20 (MIKTYQYRSILNSRNVGIRF) constitute a mitochondrion transit peptide. Residues 135–155 (LTRCIFLESVAGVPGMVAAFI) traverse the membrane as a helical segment. The Fe cation site is built by Glu-142, Glu-181, and His-184. A helical membrane pass occupies residues 200–220 (FIIYMGQGVFANLFFLVYLIK). Fe cation-binding residues include Glu-232, Glu-287, and His-290. 2 stretches are compositionally biased toward basic and acidic residues: residues 308–321 (PFALKVEDVPKEQQ) and 330–342 (PHPEGWNREQMRL). Positions 308-342 (PFALKVEDVPKEQQPDEYSLKTPHPEGWNREQMRL) are disordered.

It belongs to the alternative oxidase family. As to quaternary structure, homodimer; disulfide-linked. It depends on Fe cation as a cofactor.

Its subcellular location is the mitochondrion inner membrane. Its function is as follows. Catalyzes cyanide-resistant oxygen consumption. May increase respiration when the cytochrome respiratory pathway is restricted, or in response to low temperatures. This is Alternative oxidase, mitochondrial (AOX1) from Wickerhamomyces anomalus (Yeast).